A 320-amino-acid polypeptide reads, in one-letter code: Protein U25 (320 aa).

This sequence belongs to the herpesviridae US22 family.

The sequence is that of Protein U25 (U25) from Human herpesvirus 7 (strain JI) (HHV-7).